The chain runs to 365 residues: Gibberellin 20 oxidase 1-B (365 aa).

In terms of domain architecture, Fe2OG dioxygenase spans 199-299 (GNDSIMRLNY…RKSLAFFLCP (101 aa)). Positions 224, 226, and 280 each coordinate Fe cation. Residue Arg290 is part of the active site.

It belongs to the iron/ascorbate-dependent oxidoreductase family. GA20OX subfamily. Fe cation is required as a cofactor. It depends on L-ascorbate as a cofactor. As to expression, not detected in nodes and the ear of the elongating stem.

The enzyme catalyses gibberellin A12 + 2 2-oxoglutarate + 3 O2 + H(+) = gibberellin A9 + 2 succinate + 3 CO2 + 2 H2O. The catalysed reaction is gibberellin A53 + 2 2-oxoglutarate + 3 O2 + H(+) = gibberellin A20 + 2 succinate + 3 CO2 + 2 H2O. Key oxidase enzyme in the biosynthesis of gibberellin that catalyzes the conversion of GA12 and GA53 to GA9 and GA20 respectively, via a three-step oxidation at C-20 of the GA skeleton. In Triticum aestivum (Wheat), this protein is Gibberellin 20 oxidase 1-B (GA20ox1B).